The sequence spans 205 residues: Peptidyl-tRNA hydrolase (205 aa).

Tyr-18 contacts tRNA. The active-site Proton acceptor is His-23. TRNA-binding residues include Tyr-69, Asn-71, and Asn-117.

This sequence belongs to the PTH family. Monomer.

It is found in the cytoplasm. It carries out the reaction an N-acyl-L-alpha-aminoacyl-tRNA + H2O = an N-acyl-L-amino acid + a tRNA + H(+). Its function is as follows. Hydrolyzes ribosome-free peptidyl-tRNAs (with 1 or more amino acids incorporated), which drop off the ribosome during protein synthesis, or as a result of ribosome stalling. Catalyzes the release of premature peptidyl moieties from peptidyl-tRNA molecules trapped in stalled 50S ribosomal subunits, and thus maintains levels of free tRNAs and 50S ribosomes. This chain is Peptidyl-tRNA hydrolase, found in Thermosynechococcus vestitus (strain NIES-2133 / IAM M-273 / BP-1).